Consider the following 433-residue polypeptide: MSTKNEQLFAQACKHIPGGVNSPVRAFAGVGGTPIFMHRANGSKIYDTEDNAYIDYVGSWGPMILGHAHPKVIDAVKKAADDGLSFGTPTPFETTVADKICEIVPSVEMIRMTSSGTEATMSAIRLARGYTQRDKIVKFEGCYHGHSDSLLVKAGSGMLDIGEPTSKGVPADFAKHTITIPYNDSQAIKDCFEKWGEEIACVILEPIAGNMNMVIPSQEFHDTLREQCTANNSVLIFDEVMTGFRVGLGGAQAHFGIDPDLTCFGKIIGAGLPVGAFGGKKEVMSCIAPLGGVYQAGTLSGNPLAMRAGIAMFEDLTAEGFYDELAVKVDRLVDGFQAAADKHGINLRTNKLGGMFGMFFVTDGDTAVPQNFDEVTECDMEVFNTFFHGMLDRGIYLAPSAYEAGFMSIKHSDEDIDTSIKAADEIFAEMAKA.

At Lys266 the chain carries N6-(pyridoxal phosphate)lysine.

The protein belongs to the class-III pyridoxal-phosphate-dependent aminotransferase family. HemL subfamily. Homodimer. Requires pyridoxal 5'-phosphate as cofactor.

The protein resides in the cytoplasm. The enzyme catalyses (S)-4-amino-5-oxopentanoate = 5-aminolevulinate. The protein operates within porphyrin-containing compound metabolism; protoporphyrin-IX biosynthesis; 5-aminolevulinate from L-glutamyl-tRNA(Glu): step 2/2. This Psychrobacter arcticus (strain DSM 17307 / VKM B-2377 / 273-4) protein is Glutamate-1-semialdehyde 2,1-aminomutase.